A 190-amino-acid polypeptide reads, in one-letter code: DNA-binding transcriptional repressor TetR (190 aa).

Residues Glu-6–Phe-66 enclose the HTH tetR-type domain. Positions Ser-29 to Trp-48 form a DNA-binding region, H-T-H motif.

Homodimer.

Binds to its own palindromic promoter and represses transcription of its operon; addition of tetracycline or doxycycline (but not tigecycline) interferes with DNA binding. Addition of TetX to the DNA-TetR-antibiotic complex restores DNA binding. This Mycobacteroides abscessus (strain ATCC 19977 / DSM 44196 / CCUG 20993 / CIP 104536 / JCM 13569 / NCTC 13031 / TMC 1543 / L948) (Mycobacterium abscessus) protein is DNA-binding transcriptional repressor TetR.